Reading from the N-terminus, the 157-residue chain is Crossover junction endodeoxyribonuclease RuvC (157 aa).

Catalysis depends on residues aspartate 7, glutamate 66, and aspartate 139. Mg(2+) contacts are provided by aspartate 7, glutamate 66, and aspartate 139.

This sequence belongs to the RuvC family. Homodimer which binds Holliday junction (HJ) DNA. The HJ becomes 2-fold symmetrical on binding to RuvC with unstacked arms; it has a different conformation from HJ DNA in complex with RuvA. In the full resolvosome a probable DNA-RuvA(4)-RuvB(12)-RuvC(2) complex forms which resolves the HJ. Mg(2+) serves as cofactor.

The protein resides in the cytoplasm. The enzyme catalyses Endonucleolytic cleavage at a junction such as a reciprocal single-stranded crossover between two homologous DNA duplexes (Holliday junction).. In terms of biological role, the RuvA-RuvB-RuvC complex processes Holliday junction (HJ) DNA during genetic recombination and DNA repair. Endonuclease that resolves HJ intermediates. Cleaves cruciform DNA by making single-stranded nicks across the HJ at symmetrical positions within the homologous arms, yielding a 5'-phosphate and a 3'-hydroxyl group; requires a central core of homology in the junction. The consensus cleavage sequence is 5'-(A/T)TT(C/G)-3'. Cleavage occurs on the 3'-side of the TT dinucleotide at the point of strand exchange. HJ branch migration catalyzed by RuvA-RuvB allows RuvC to scan DNA until it finds its consensus sequence, where it cleaves and resolves the cruciform DNA. In Campylobacter curvus (strain 525.92), this protein is Crossover junction endodeoxyribonuclease RuvC.